The primary structure comprises 331 residues: MEFYASLKSIAMHVPSERVKNAEFQQFLDTSDEWIEKRTGIKERRFANDEEKSSDLGVIAAKQAIERAHLTPKDIDLVVVATLSPDFLAMPSTACVLSAKLGIENKPAFDISAACTGFIYLLSVAKAYVESGMYENVLIVGAEKTSSVLDFKDRGTCILFGDGAGACVIGRTKRLKESILDVQISANGNFSNYLYTPRTLKPTPFNAKEEASEPFLCMKGNEVFKLAVKTLLKDVEMILEKNALKPEDVRLFIPHQANFRIIQAVREHLDFKDEQVVLTVHKYGNTSAASIPMAMGEAYEEGRLKKGDLMLLDAFGGGLTWGSALVYFGGS.

Active-site residues include Cys115 and His255. Residues 256–260 (QANFR) form an ACP-binding region. Asn285 is a catalytic residue.

The protein belongs to the thiolase-like superfamily. FabH family. As to quaternary structure, homodimer.

It is found in the cytoplasm. The enzyme catalyses malonyl-[ACP] + acetyl-CoA + H(+) = 3-oxobutanoyl-[ACP] + CO2 + CoA. It functions in the pathway lipid metabolism; fatty acid biosynthesis. Its function is as follows. Catalyzes the condensation reaction of fatty acid synthesis by the addition to an acyl acceptor of two carbons from malonyl-ACP. Catalyzes the first condensation reaction which initiates fatty acid synthesis and may therefore play a role in governing the total rate of fatty acid production. Possesses both acetoacetyl-ACP synthase and acetyl transacylase activities. Its substrate specificity determines the biosynthesis of branched-chain and/or straight-chain of fatty acids. The sequence is that of Beta-ketoacyl-[acyl-carrier-protein] synthase III from Helicobacter pylori (strain ATCC 700392 / 26695) (Campylobacter pylori).